The sequence spans 120 residues: Large ribosomal subunit protein bL19 (120 aa).

The protein belongs to the bacterial ribosomal protein bL19 family.

In terms of biological role, this protein is located at the 30S-50S ribosomal subunit interface and may play a role in the structure and function of the aminoacyl-tRNA binding site. The protein is Large ribosomal subunit protein bL19 of Nostoc punctiforme (strain ATCC 29133 / PCC 73102).